The primary structure comprises 725 residues: Polyribonucleotide nucleotidyltransferase (725 aa).

Residues Asp487 and Asp493 each coordinate Mg(2+). The region spanning 554–613 (PRIETMQIPTDKIREVIGTGGKVIREIVEKTGAKIDIQDTGVVKIASSDGKAIKAAYNWI) is the KH domain. Residues 623-691 (GMIYDGTVVK…ERGKIRLSMK (69 aa)) form the S1 motif domain. The tract at residues 699-725 (EDLTEKLKAEREADRNRERQARQSAGE) is disordered. The span at 701-719 (LTEKLKAEREADRNRERQA) shows a compositional bias: basic and acidic residues.

The protein belongs to the polyribonucleotide nucleotidyltransferase family. Requires Mg(2+) as cofactor.

It is found in the cytoplasm. The catalysed reaction is RNA(n+1) + phosphate = RNA(n) + a ribonucleoside 5'-diphosphate. Functionally, involved in mRNA degradation. Catalyzes the phosphorolysis of single-stranded polyribonucleotides processively in the 3'- to 5'-direction. In Methylobacterium sp. (strain 4-46), this protein is Polyribonucleotide nucleotidyltransferase.